The following is a 434-amino-acid chain: METKRSKLYLLTLGCSKNMVDSEVLLAQAKANQIYLAEDFHEADTILINTCGFIDKSKQESIDQILEAIRFKEAKRIKKVIVFGCLSERYKDALREEIPEVDCYFGTRDLSQIIAELGGHYKTHLLGERELLTPPYFSYLKISEGCDHPCAFCAIPLMRGKQVSRPIDELLLEAKKLKEKGVRELCLIAQDTTYYGHDLNGKRQLAELLQRLSDLQFDWIRLLYAYPAMFPTDILPVMRERENICKYLDLPLQHVSDEMLKSMRRGISKRKTTELIAQIRSEVPGIRLRTTMLVGYPNETEEQFSELVEFVRETQFDRLGCFAYSHEEGTEAHELPDTLTEEEKERRVELLMAAQEEIAYAKNQALVGSFMPVLIERFEANFAIGRTEYDAPEVDNEVVIALDEAEQKKVKVGTFYQARITDAEAFDLFGSLVL.

An MTTase N-terminal domain is found at 6–122 (SKLYLLTLGC…IIAELGGHYK (117 aa)). The [4Fe-4S] cluster site is built by C15, C51, C85, C146, C150, and C153. The Radical SAM core domain occupies 132-361 (LTPPYFSYLK…MAAQEEIAYA (230 aa)). The 71-residue stretch at 364–434 (QALVGSFMPV…AFDLFGSLVL (71 aa)) folds into the TRAM domain.

Belongs to the methylthiotransferase family. RimO subfamily. It depends on [4Fe-4S] cluster as a cofactor.

It localises to the cytoplasm. The enzyme catalyses L-aspartate(89)-[ribosomal protein uS12]-hydrogen + (sulfur carrier)-SH + AH2 + 2 S-adenosyl-L-methionine = 3-methylsulfanyl-L-aspartate(89)-[ribosomal protein uS12]-hydrogen + (sulfur carrier)-H + 5'-deoxyadenosine + L-methionine + A + S-adenosyl-L-homocysteine + 2 H(+). Its function is as follows. Catalyzes the methylthiolation of an aspartic acid residue of ribosomal protein uS12. This chain is Ribosomal protein uS12 methylthiotransferase RimO, found in Chloroherpeton thalassium (strain ATCC 35110 / GB-78).